The primary structure comprises 301 residues: 2-phosphoglycerate kinase (301 aa).

In terms of domain architecture, ATP-cone spans 2-89 (IRVIEKGDKV…FWRRFRKMKV (88 aa)).

This sequence belongs to the 2-phosphoglycerate kinase family. A divalent metal cation is required as a cofactor.

The enzyme catalyses (2R)-2-phosphoglycerate + ATP = (2R)-2,3-bisphosphoglycerate + ADP + H(+). It participates in thermoadapter biosynthesis; cyclic 2,3-diphosphoglycerate biosynthesis; cyclic 2,3-diphosphoglycerate from 2-phospho-D-glycerate: step 1/2. Functionally, catalyzes the phosphorylation of 2-phosphoglycerate to 2,3-diphosphoglycerate. Involved in the biosynthesis of cyclic 2,3-bisphosphoglycerate, a thermoprotectant. This chain is 2-phosphoglycerate kinase, found in Pyrococcus horikoshii (strain ATCC 700860 / DSM 12428 / JCM 9974 / NBRC 100139 / OT-3).